The primary structure comprises 359 residues: Phospho-N-acetylmuramoyl-pentapeptide-transferase (359 aa).

The next 10 helical transmembrane spans lie at 3 to 23, 55 to 75, 80 to 100, 117 to 137, 156 to 176, 187 to 207, 231 to 251, 255 to 275, 280 to 300, and 334 to 354; these read QIMIAVAIAVAVSILLTPALI, VAILAGIWAGYFGTHLAGLAF, ITASGLLVLGLATSLGGVGFL, TAKTVGQITSAVLFAVLVLQF, IATVTLTPALFVLFCVLVVSA, LDGLAAGCMAMVTGAYVLITF, LALIAAATAGACIGFLWWNAA, IFMGDTGSLALGGIIAGLSVT, ILAVVLGALFVAEITSVVLQI, and FWLLTAITCGLGVALFYGEWL.

It belongs to the glycosyltransferase 4 family. MraY subfamily. The cofactor is Mg(2+).

The protein localises to the cell membrane. It catalyses the reaction UDP-N-acetyl-alpha-D-muramoyl-L-alanyl-gamma-D-glutamyl-meso-2,6-diaminopimeloyl-D-alanyl-D-alanine + di-trans,octa-cis-undecaprenyl phosphate = di-trans,octa-cis-undecaprenyl diphospho-N-acetyl-alpha-D-muramoyl-L-alanyl-D-glutamyl-meso-2,6-diaminopimeloyl-D-alanyl-D-alanine + UMP. The protein operates within cell wall biogenesis; peptidoglycan biosynthesis. Functionally, catalyzes the initial step of the lipid cycle reactions in the biosynthesis of the cell wall peptidoglycan: transfers peptidoglycan precursor phospho-MurNAc-pentapeptide from UDP-MurNAc-pentapeptide onto the lipid carrier undecaprenyl phosphate, yielding undecaprenyl-pyrophosphoryl-MurNAc-pentapeptide, known as lipid I. This chain is Phospho-N-acetylmuramoyl-pentapeptide-transferase, found in Mycobacterium ulcerans (strain Agy99).